The following is a 451-amino-acid chain: 23S rRNA (uracil(1939)-C(5))-methyltransferase RlmD (451 aa).

The TRAM domain occupies 20 to 78 (QIPAGKKQRLTIERLSDDGRGIAFLEGKTWFVAGSLAGEEVEARVLNARGKVVEARTER). [4Fe-4S] cluster is bound by residues C91, C97, C100, and C179. The S-adenosyl-L-methionine site is built by Q283, F312, N317, E333, D360, and D381. C407 serves as the catalytic Nucleophile.

Belongs to the class I-like SAM-binding methyltransferase superfamily. RNA M5U methyltransferase family. RlmD subfamily.

The enzyme catalyses uridine(1939) in 23S rRNA + S-adenosyl-L-methionine = 5-methyluridine(1939) in 23S rRNA + S-adenosyl-L-homocysteine + H(+). Functionally, catalyzes the formation of 5-methyl-uridine at position 1939 (m5U1939) in 23S rRNA. The chain is 23S rRNA (uracil(1939)-C(5))-methyltransferase RlmD from Pseudomonas savastanoi pv. phaseolicola (strain 1448A / Race 6) (Pseudomonas syringae pv. phaseolicola (strain 1448A / Race 6)).